Reading from the N-terminus, the 200-residue chain is dTTP/UTP pyrophosphatase (200 aa).

The Proton acceptor role is filled by aspartate 76.

It belongs to the Maf family. YhdE subfamily. Requires a divalent metal cation as cofactor.

It localises to the cytoplasm. It catalyses the reaction dTTP + H2O = dTMP + diphosphate + H(+). The enzyme catalyses UTP + H2O = UMP + diphosphate + H(+). Nucleoside triphosphate pyrophosphatase that hydrolyzes dTTP and UTP. May have a dual role in cell division arrest and in preventing the incorporation of modified nucleotides into cellular nucleic acids. The polypeptide is dTTP/UTP pyrophosphatase (Acetivibrio thermocellus (strain ATCC 27405 / DSM 1237 / JCM 9322 / NBRC 103400 / NCIMB 10682 / NRRL B-4536 / VPI 7372) (Clostridium thermocellum)).